Consider the following 89-residue polypeptide: uncharacterized protein (89 aa).

The protein to Synechocystis PCC 6803 slr1025.

This is an uncharacterized protein from Ureaplasma parvum serovar 3 (strain ATCC 700970).